Reading from the N-terminus, the 157-residue chain is 2-C-methyl-D-erythritol 2,4-cyclodiphosphate synthase (157 aa).

Residues Asp-8 and His-10 each coordinate a divalent metal cation. 4-CDP-2-C-methyl-D-erythritol 2-phosphate contacts are provided by residues 8-10 (DVH) and 34-35 (HS). His-42 is a binding site for a divalent metal cation. 4-CDP-2-C-methyl-D-erythritol 2-phosphate contacts are provided by residues 56-58 (DIG), 132-135 (TTNE), and Arg-142.

This sequence belongs to the IspF family. Homotrimer. Requires a divalent metal cation as cofactor.

The enzyme catalyses 4-CDP-2-C-methyl-D-erythritol 2-phosphate = 2-C-methyl-D-erythritol 2,4-cyclic diphosphate + CMP. It participates in isoprenoid biosynthesis; isopentenyl diphosphate biosynthesis via DXP pathway; isopentenyl diphosphate from 1-deoxy-D-xylulose 5-phosphate: step 4/6. Involved in the biosynthesis of isopentenyl diphosphate (IPP) and dimethylallyl diphosphate (DMAPP), two major building blocks of isoprenoid compounds. Catalyzes the conversion of 4-diphosphocytidyl-2-C-methyl-D-erythritol 2-phosphate (CDP-ME2P) to 2-C-methyl-D-erythritol 2,4-cyclodiphosphate (ME-CPP) with a corresponding release of cytidine 5-monophosphate (CMP). The sequence is that of 2-C-methyl-D-erythritol 2,4-cyclodiphosphate synthase from Chlorobaculum parvum (strain DSM 263 / NCIMB 8327) (Chlorobium vibrioforme subsp. thiosulfatophilum).